A 296-amino-acid polypeptide reads, in one-letter code: 5'-3' exonuclease (296 aa).

The region spanning 175–262 (VMPKALIDIK…VPLACTLKDA (88 aa)) is the 5'-3' exonuclease domain.

Its function is as follows. 5'-3' exonuclease acting preferentially on double-stranded DNA. This is 5'-3' exonuclease (ypcP) from Bacillus subtilis (strain 168).